The chain runs to 510 residues: Flavonoid 3',5'-hydroxylase (510 aa).

Residue cysteine 447 participates in heme binding.

It belongs to the cytochrome P450 family. Heme is required as a cofactor.

The catalysed reaction is a 3',5'-unsubstituted flavanone + 2 reduced [NADPH--hemoprotein reductase] + 2 O2 = a 3',5'-dihydroxyflavanone + 2 oxidized [NADPH--hemoprotein reductase] + 2 H2O + 2 H(+). It functions in the pathway pigment biosynthesis; anthocyanin biosynthesis. Catalyzes the 3'5'-hydroxylation of naringenin and eriodictyol to form 5,7,3,'4',5'-pentahydroxyflavanone and 3',5'-hydroxylation of dihydrokaempferol and dihydroquercetin to form dihydromyricetin. The polypeptide is Flavonoid 3',5'-hydroxylase (CYP75A7) (Eustoma exaltatum subsp. russellianum (Bluebells)).